A 115-amino-acid chain; its full sequence is Holo-[acyl-carrier-protein] synthase (115 aa).

Mg(2+) contacts are provided by aspartate 8 and glutamate 50.

The protein belongs to the P-Pant transferase superfamily. AcpS family. Mg(2+) is required as a cofactor.

Its subcellular location is the cytoplasm. The catalysed reaction is apo-[ACP] + CoA = holo-[ACP] + adenosine 3',5'-bisphosphate + H(+). Functionally, transfers the 4'-phosphopantetheine moiety from coenzyme A to a Ser of acyl-carrier-protein. The sequence is that of Holo-[acyl-carrier-protein] synthase from Renibacterium salmoninarum (strain ATCC 33209 / DSM 20767 / JCM 11484 / NBRC 15589 / NCIMB 2235).